The chain runs to 23 residues: Laccase-1 (23 aa).

The protein belongs to the multicopper oxidase family. It depends on Cu cation as a cofactor.

It localises to the secreted. The catalysed reaction is 4 hydroquinone + O2 = 4 benzosemiquinone + 2 H2O. With respect to regulation, strongly inhibited by sodium azide, sodium cyanide, Li(+), Sn(+), Hg(2+), and the disulfide-reducing agents beta-mercaptoethanol, dithiothreitol and thioglycolic acid. Moderately inhibited by Mn(2+) and Fe(2+), inhibition by these metal ions is stronger at 0.1 mM than at 1 mM. Moderately inhibited by Cu(2+). Its function is as follows. Lignin degradation and detoxification of lignin-derived products. Demethylates eucalyptus hard wood lignin. Has high activity against the non-phenolic heterocyclic compound ABTS, and lower activity against the phenolic substrates syringic acid, caffeic acid, syringaldazine, vanillic acid, catechol and levodihydroxyphenylalanine. In Galerina sp, this protein is Laccase-1.